The sequence spans 432 residues: E3 ubiquitin-protein ligase RNF135 (432 aa).

The RING-type zinc finger occupies 21-63 (CIICQGLLDWPATLPCGHSFCRHCLEALWGARDARRWACPTCR). The tract at residues 95 to 121 (GSDPAHCPCPGSSSLSSAAARPRRRPE) is disordered. A compositionally biased stretch (low complexity) spans 102-114 (PCPGSSSLSSAAA). 2 coiled-coil regions span residues 121–156 (ELQR…QNQR) and 191–216 (DTAA…ESVT). The 192-residue stretch at 241 to 432 (PDQSHPALRR…NYLIIKQVKV (192 aa)) folds into the B30.2/SPRY domain.

As to quaternary structure, homodimer. Interacts (homodimer) with RIGI (double-stranded RNA-bound oligomeric form); involved in both RIGI ubiquitination, oligomerization into filaments associated with viral RNAs and the bridging of these filaments. Interacts with UBE2D3 and UBE2N; E2 ubiquitin ligases involved in RNF135-mediated ubiquitination of RIGI and activation of the RIG-I signaling pathway. Interacts with PCBP2. In terms of processing, (Microbial infection) Cleaved and inactivated by hepatitis C virus NS3/NS4A. Expressed in skeletal muscle, spleen, kidney, placenta, prostate, stomach, thyroid and tongue. Also weakly expressed in heart, thymus, liver and lung.

The protein resides in the cytoplasm. It is found in the stress granule. It catalyses the reaction S-ubiquitinyl-[E2 ubiquitin-conjugating enzyme]-L-cysteine + [acceptor protein]-L-lysine = [E2 ubiquitin-conjugating enzyme]-L-cysteine + N(6)-ubiquitinyl-[acceptor protein]-L-lysine.. The protein operates within protein modification; protein ubiquitination. E2-dependent E3 ubiquitin-protein ligase that functions as a RIGI coreceptor in the sensing of viral RNAs in cell cytoplasm and the activation of the antiviral innate immune response. Together with the UBE2D3, UBE2N and UB2V1 E2 ligases, catalyzes the 'Lys-63'-linked polyubiquitination of RIGI oligomerized on viral RNAs, an essential step in the activation of the RIG-I signaling pathway. Through a ubiquitin-independent parallel mechanism, which consists in bridging RIGI filaments forming on longer viral RNAs, further activates the RIG-I signaling pathway. This second mechanism that synergizes with the ubiquitin-dependent one would thereby allow an RNA length-dependent regulation of the RIG-I signaling pathway. Associated with the E2 ligase UBE2N, also constitutively synthesizes unanchored 'Lys-63'-linked polyubiquitin chains that may also activate the RIG-I signaling pathway. The chain is E3 ubiquitin-protein ligase RNF135 from Homo sapiens (Human).